The chain runs to 418 residues: MDKLVVNGGNPLFGSVEIGGAKNAAVAILPAAIMASEGISVIDNIPDIQDIQRLERIITSLGCKVKRVQNTVEIDSTNLTSVNADTEDGSKMRASYYLIGALLGRFGKAKVELPGGCPIGVRPIDQHIKGFEALGATVKISHGTVEAQADKLIGTNIYFDVVSVGATINLMLASVFAEGTTVLENAAKEPHIVDVANFLNSMGANIKGAGTDVIRIAGVEKLKGCNYSVIPDQIEAATYMIATAACGGCVTIKNVIPKHLESISAKLIEMGADIKEGDDYVTIESHKNLKGVNIKTLPYPGFPTDAQQPMSTLLSISQGRSIVNESIWESRLKHVDELKKMGANIKVEGTVAIIDGVEKLTGANVKATDLRAGAAMVIAALAAEGVSEISCIEHIDRGYPHIEDKFKELGANIRREKI.

22–23 is a binding site for phosphoenolpyruvate; the sequence is KN. Residue R93 participates in UDP-N-acetyl-alpha-D-glucosamine binding. C117 acts as the Proton donor in catalysis. 2-(S-cysteinyl)pyruvic acid O-phosphothioketal is present on C117. UDP-N-acetyl-alpha-D-glucosamine-binding positions include 122–126, D305, and I327; that span reads RPIDQ.

It belongs to the EPSP synthase family. MurA subfamily.

It localises to the cytoplasm. The catalysed reaction is phosphoenolpyruvate + UDP-N-acetyl-alpha-D-glucosamine = UDP-N-acetyl-3-O-(1-carboxyvinyl)-alpha-D-glucosamine + phosphate. Its pathway is cell wall biogenesis; peptidoglycan biosynthesis. Cell wall formation. Adds enolpyruvyl to UDP-N-acetylglucosamine. The polypeptide is UDP-N-acetylglucosamine 1-carboxyvinyltransferase 2 (Clostridium acetobutylicum (strain ATCC 824 / DSM 792 / JCM 1419 / IAM 19013 / LMG 5710 / NBRC 13948 / NRRL B-527 / VKM B-1787 / 2291 / W)).